Reading from the N-terminus, the 81-residue chain is Beta-catenin-interacting protein 1 (81 aa).

Ser59 is modified (phosphoserine).

It belongs to the CTNNBIP1 family. Binds CTNNB1.

The protein resides in the cytoplasm. Its subcellular location is the nucleus. Prevents the interaction between CTNNB1 and TCF family members, and acts as a negative regulator of the Wnt signaling pathway. In Bos taurus (Bovine), this protein is Beta-catenin-interacting protein 1 (CTNNBIP1).